A 316-amino-acid chain; its full sequence is HTH-type transcriptional regulator cbl (316 aa).

Residues 1–59 form the HTH lysR-type domain; it reads MNFQQLKIIREAARQDYNLTEVANMLYTSQSGVSRHIRELEEELGIEIFIRRGKRLLGM. Positions 19–38 form a DNA-binding region, H-T-H motif; that stretch reads LTEVANMLYTSQSGVSRHIR.

It belongs to the LysR transcriptional regulatory family.

In terms of biological role, may be an accessory regulatory protein within the cys regulon. The polypeptide is HTH-type transcriptional regulator cbl (cbl) (Klebsiella aerogenes (Enterobacter aerogenes)).